Reading from the N-terminus, the 264-residue chain is Molybdenum transport system permease protein ModB (264 aa).

6 helical membrane passes run 11-31 (VYLP…AIAI), 57-77 (TAAA…LVLA), 90-110 (LILL…LYAF), 127-147 (IAFS…PYLV), 176-196 (WWRV…VLAF), and 234-254 (AAVA…LGVG). Residues 51–253 (LLLSVKTAAA…VVAALVVLGV (203 aa)) enclose the ABC transmembrane type-1 domain.

Belongs to the binding-protein-dependent transport system permease family. CysTW subfamily.

The protein localises to the cell membrane. Functionally, part of the binding-protein-dependent transport system ModABCD for molybdenum; probably responsible for the translocation of the substrate across the membrane. This chain is Molybdenum transport system permease protein ModB (modB), found in Mycobacterium bovis (strain ATCC BAA-935 / AF2122/97).